The primary structure comprises 295 residues: 33 kDa chaperonin (295 aa).

2 disulfides stabilise this stretch: C236–C238 and C269–C272.

The protein belongs to the HSP33 family. In terms of processing, under oxidizing conditions two disulfide bonds are formed involving the reactive cysteines. Under reducing conditions zinc is bound to the reactive cysteines and the protein is inactive.

The protein localises to the cytoplasm. In terms of biological role, redox regulated molecular chaperone. Protects both thermally unfolding and oxidatively damaged proteins from irreversible aggregation. Plays an important role in the bacterial defense system toward oxidative stress. This is 33 kDa chaperonin from Citrifermentans bemidjiense (strain ATCC BAA-1014 / DSM 16622 / JCM 12645 / Bem) (Geobacter bemidjiensis).